The following is a 190-amino-acid chain: Ion-translocating oxidoreductase complex subunit B (190 aa).

The tract at residues 1-26 is hydrophobic; the sequence is MLTFWLAVATLSALALVAGAVLGFAA. Residues 32–90 form the 4Fe-4S domain; that stretch reads KTDPVAERIDALLPQSQCAQCGYPGCRPYAEAVAGGAPINKCVPGGEAVMLKIAAQLSV. [4Fe-4S] cluster is bound by residues Cys-49, Cys-52, Cys-57, Cys-73, Cys-115, Cys-118, Cys-121, Cys-125, Cys-145, Cys-148, Cys-151, and Cys-155. 2 4Fe-4S ferredoxin-type domains span residues 106–135 and 136–165; these read RVAWIDEGNCIGCTKCIQACPVDAIVGATR and AVHTVVSDLCTGCDLCVAPCPTNCIEMRPL.

Belongs to the 4Fe4S bacterial-type ferredoxin family. RnfB subfamily. As to quaternary structure, the complex is composed of six subunits: RnfA, RnfB, RnfC, RnfD, RnfE and RnfG. [4Fe-4S] cluster serves as cofactor.

Its subcellular location is the cell inner membrane. Functionally, part of a membrane-bound complex that couples electron transfer with translocation of ions across the membrane. In Sodalis glossinidius (strain morsitans), this protein is Ion-translocating oxidoreductase complex subunit B.